Consider the following 100-residue polypeptide: UPF0125 protein HD_1828 (100 aa).

It belongs to the UPF0125 (RnfH) family.

In Haemophilus ducreyi (strain 35000HP / ATCC 700724), this protein is UPF0125 protein HD_1828.